Here is a 103-residue protein sequence, read N- to C-terminus: NAD(P)H-quinone oxidoreductase subunit 4L (103 aa).

The next 3 membrane-spanning stretches (helical) occupy residues Leu5–Thr25, Val32–Asn52, and Ile66–Ile86.

Belongs to the complex I subunit 4L family. In terms of assembly, NDH-1 can be composed of about 15 different subunits; different subcomplexes with different compositions have been identified which probably have different functions.

Its subcellular location is the cellular thylakoid membrane. The enzyme catalyses a plastoquinone + NADH + (n+1) H(+)(in) = a plastoquinol + NAD(+) + n H(+)(out). It catalyses the reaction a plastoquinone + NADPH + (n+1) H(+)(in) = a plastoquinol + NADP(+) + n H(+)(out). Functionally, NDH-1 shuttles electrons from an unknown electron donor, via FMN and iron-sulfur (Fe-S) centers, to quinones in the respiratory and/or the photosynthetic chain. The immediate electron acceptor for the enzyme in this species is believed to be plastoquinone. Couples the redox reaction to proton translocation, and thus conserves the redox energy in a proton gradient. Cyanobacterial NDH-1 also plays a role in inorganic carbon-concentration. This chain is NAD(P)H-quinone oxidoreductase subunit 4L, found in Synechocystis sp. (strain ATCC 27184 / PCC 6803 / Kazusa).